A 314-amino-acid polypeptide reads, in one-letter code: Olfactory receptor 6C6 (314 aa).

Topologically, residues 1–24 are extracellular; that stretch reads MKNKSMEIEFILLGLTDDPQLQIV. Residue Asn3 is glycosylated (N-linked (GlcNAc...) asparagine). The chain crosses the membrane as a helical span at residues 25 to 45; the sequence is IFLFLFLNYTLSLMGNLIIII. The Cytoplasmic portion of the chain corresponds to 46-63; that stretch reads LTLLDPRLKTPMYFFLRN. A helical membrane pass occupies residues 64–84; sequence FSFLEVIFTTVCIPRFLITIV. Topologically, residues 85-95 are extracellular; the sequence is TRDKTISYNNC. Cys95 and Cys177 are joined by a disulfide. A helical transmembrane segment spans residues 96-116; it reads ATQLFFILLPGVTEFYLLAAM. At 117–141 the chain is on the cytoplasmic side; sequence SYDRYVAICKPLHYPIIMSSKVCYQ. The chain crosses the membrane as a helical span at residues 142-162; it reads LVLSSWVTGFLIIFPPLVMGL. Over 163–199 the chain is Extracellular; it reads KLDFCASKTIDHFMCETSPILQISCTDTHVLELMSFT. Residues 200 to 220 form a helical membrane-spanning segment; it reads LAVVTLVVTLVLVILSYTCII. Residues 221–237 are Cytoplasmic-facing; it reads KTILKFSSAQQRNKAFS. The helical transmembrane segment at 238-258 threads the bilayer; the sequence is TCTSHMIVVSMTYGSCIFMYI. Residues 259 to 269 lie on the Extracellular side of the membrane; that stretch reads KPSAKERVTVS. Residues 270-290 form a helical membrane-spanning segment; it reads KGVALLYTSIAPLLNPFIYTL. Residues 291-314 lie on the Cytoplasmic side of the membrane; the sequence is RNQQVKEVFWDVLQKNLCFSKRPF.

This sequence belongs to the G-protein coupled receptor 1 family.

It localises to the cell membrane. Odorant receptor. This chain is Olfactory receptor 6C6 (OR6C6), found in Homo sapiens (Human).